Reading from the N-terminus, the 604-residue chain is Prostaglandin G/H synthase 2 (604 aa).

The signal sequence occupies residues 1–17 (MLARALLLCAAVALSGA). Positions 18–55 (ANPCCSHPCQNRGVCMSVGFDQYKCDCTRTGFYGENCT) constitute an EGF-like domain. Intrachain disulfides connect C21-C32, C22-C145, C26-C42, and C44-C54. N53 carries N-linked (GlcNAc...) asparagine glycosylation. R106 lines the substrate pocket. Residue N130 is glycosylated (N-linked (GlcNAc...) asparagine). The active-site Proton acceptor is H193. Y341 contacts substrate. Residue Y371 is the For cyclooxygenase activity of the active site. H374 is a heme b binding site. N-linked (GlcNAc...) asparagine glycosylation occurs at N396. The residue at position 526 (C526) is an S-nitrosocysteine. A disulfide bond links C555 and C561. S565 bears the O-acetylserine mark. N580 carries N-linked (GlcNAc...) asparagine glycosylation.

The protein belongs to the prostaglandin G/H synthase family. In terms of assembly, homodimer. It depends on heme b as a cofactor. S-nitrosylation by NOS2 (iNOS) activates enzyme activity. S-nitrosylation may take place on different Cys residues in addition to Cys-526. In terms of processing, acetylated at Ser-565 by SPHK1. During neuroinflammation, acetylation by SPHK1 promotes neuronal secretion of specialized preresolving mediators (SPMs), especially 15-R-lipoxin A4, which results in an increase of phagocytic microglia.

The protein localises to the microsome membrane. It is found in the endoplasmic reticulum membrane. Its subcellular location is the nucleus inner membrane. It localises to the nucleus outer membrane. The catalysed reaction is (5Z,8Z,11Z,14Z)-eicosatetraenoate + AH2 + 2 O2 = prostaglandin H2 + A + H2O. The enzyme catalyses (5Z,8Z,11Z,14Z)-eicosatetraenoate + 2 O2 = prostaglandin G2. It carries out the reaction prostaglandin G2 + AH2 = prostaglandin H2 + A + H2O. It catalyses the reaction (5Z,8Z,11Z,14Z,17Z)-eicosapentaenoate + 2 O2 = prostaglandin G3. The catalysed reaction is prostaglandin G3 + AH2 = prostaglandin H3 + A + H2O. The enzyme catalyses (8Z,11Z,14Z)-eicosatrienoate + 2 O2 = prostaglandin G1. It carries out the reaction prostaglandin G1 + AH2 = prostaglandin H1 + A + H2O. It catalyses the reaction 2-(5Z,8Z,11Z,14Z)-eicosatetraenoyl-sn-glycero-3-phosphoethanolamine + 2 O2 = 2-(prostaglandin G2)-sn-glycero-3-phosphoethanolamine. The catalysed reaction is 2-(prostaglandin G2)-sn-glycero-3-phosphoethanolamine + AH2 = 2-(prostaglandin H2)-sn-glycero-3-phosphoethanolamine + A + H2O. The enzyme catalyses 2-(5Z,8Z,11Z,14Z)-eicosatetraenoyl-sn-glycero-3-phosphocholine + 2 O2 = 2-(prostaglandin G2)-sn-glycero-3-phosphocholine. It carries out the reaction 2-(prostaglandin G2)-sn-glycero-3-phosphocholine + AH2 = 2-(prostaglandin H2)-sn-glycero-3-phosphocholine + A + H2O. It catalyses the reaction (15S)-hydroperoxy-(5Z,8Z,11Z,13E)-eicosatetraenoate + AH2 = (15S)-hydroxy-(5Z,8Z,11Z,13E)-eicosatetraenoate + A + H2O. The catalysed reaction is 2-(5Z,8Z,11Z,14Z)-eicosatetraenoyl-sn-glycero-3-phosphocholine + AH2 + O2 = 2-[(15S)-hydroxy-(5Z,8Z,11Z,13E)-eicosatetraenoyl]-sn-glycero-3-phosphocholine + A + H2O. The enzyme catalyses 2-(5Z,8Z,11Z,14Z)-eicosatetraenoyl-sn-glycero-3-phosphocholine + AH2 + O2 = 2-[(15R)-hydroxy-(5Z,8Z,11Z,13E)-eicosatetraenoyl]-sn-glycero-3-phosphocholine + A + H2O. It carries out the reaction 2-(5Z,8Z,11Z,14Z)-eicosatetraenoyl-sn-glycero-3-phosphocholine + AH2 + O2 = 2-[(11R)-hydroxy-(5Z,8Z,12E,14Z)-eicosatetraenoyl]-sn-glycero-3-phosphocholine + A + H2O. It catalyses the reaction (9Z,12Z)-octadecadienoate + AH2 + O2 = 9-hydroxy-(10E,12Z)-octadecadienoate + A + H2O. The catalysed reaction is (9Z,12Z)-octadecadienoate + AH2 + O2 = 13-hydroxy-(9Z,11E)-octadecadienoate + A + H2O. The enzyme catalyses (5Z,8Z,11Z,14Z)-eicosatetraenoate + AH2 + O2 = (15R)-hydroxy-(5Z,8Z,11Z,13E)-eicosatetraenoate + A + H2O. It carries out the reaction (5Z,8Z,11Z,14Z)-eicosatetraenoate + AH2 + O2 = (11R)-hydroxy-(5Z,8Z,12E,14Z)-eicosatetraenoate + A + H2O. It catalyses the reaction (5Z,8Z,11Z,14Z,17Z)-eicosapentaenoate + AH2 + O2 = (11R)-hydroxy-(5Z,8Z,12E,14Z,17Z)-eicosapentaenoate + A + H2O. The catalysed reaction is (5Z,8Z,11Z,14Z,17Z)-eicosapentaenoate + AH2 + O2 = (18S)-hydroxy-(5Z,8Z,11Z,14Z,16E)-eicosapentaenoate + A + H2O. The enzyme catalyses (5Z,8Z,11Z,14Z,17Z)-eicosapentaenoate + AH2 + O2 = (18R)-hydroxy-(5Z,8Z,11Z,14Z,16E)-eicosapentaenoate + A + H2O. It carries out the reaction (5Z,8Z,11Z,14Z,17Z)-eicosapentaenoate + AH2 + O2 = (15R)-hydroxy-(5Z,8Z,11Z,13E,17Z)-eicosapentaenoate + A + H2O. It catalyses the reaction (5Z,8Z,11Z,14Z,17Z)-eicosapentaenoate + AH2 + O2 = (15S)-hydroxy-(5Z,8Z,11Z,13E,17Z)-eicosapentaenoate + A + H2O. The catalysed reaction is (7Z,10Z,13Z,16Z,19Z)-docosapentaenoate + AH2 + O2 = 13R-hydroxy-(7Z,10Z,14E,16Z,19Z)-docosapentaenoate + A + H2O. The enzyme catalyses (4Z,7Z,10Z,13Z,16Z,19Z)-docosahexaenoate + AH2 + O2 = 13-hydroxy-(4Z,7Z,10Z,14E,16Z,19Z)-docosahexaenoate + A + H2O. It carries out the reaction (5S)-hydroxy-(6E,8Z,11Z,14Z)-eicosatetraenoate + AH2 + O2 = (5S,15R)-dihydroxy-(6E,8Z,11Z,13E)-eicosatetraenoate + A + H2O. It catalyses the reaction (4Z,7Z,10Z,13Z,16Z,19Z)-docosahexaenoate + AH2 + O2 = 17R-hydroxy-(4Z,7Z,10Z,13Z,15E,19Z)-docosahexaenoate + A + H2O. The catalysed reaction is (5S)-hydroxy-(6E,8Z,11Z,14Z)-eicosatetraenoate + AH2 + O2 = (5S,15S)-dihydroxy-(6E,8Z,11Z,13E)-eicosatetraenoate + A + H2O. The enzyme catalyses (5S)-hydroxy-(6E,8Z,11Z,14Z)-eicosatetraenoate + AH2 + O2 = (5S,11R)-dihydroxy-(6E,8Z,12E,14Z)-eicosatetraenoate + A + H2O. It carries out the reaction 2-(5Z,8Z,11Z,14Z-eicosatetraenoyl)-glycerol + 2 O2 = 2-glyceryl-prostaglandin G2. It catalyses the reaction 2-glyceryl-prostaglandin G2 + AH2 = 2-glyceryl-prostaglandin H2 + A + H2O. The catalysed reaction is (5Z,8Z,11Z,14Z)-eicosatetraenoate + O2 = (15R)-hydroperoxy-(5Z,8Z,11Z,13E)-eicosatetraenoate. The enzyme catalyses (5Z,8Z,11Z,14Z)-eicosatetraenoate + O2 = 11R-hydroperoxy-(5Z,8Z,12E,14Z)-eicosatetraenoate. It carries out the reaction (9Z,12Z)-octadecadienoate + AH2 + O2 = (9R)-hydroxy-(10E,12Z)-octadecadienoate + A + H2O. It catalyses the reaction (9Z,12Z)-octadecadienoate + AH2 + O2 = (9S)-hydroxy-(10E,12Z)-octadecadienoate + A + H2O. The catalysed reaction is (9Z,12Z)-octadecadienoate + AH2 + O2 = (13S)-hydroxy-(9Z,11E)-octadecadienoate + A + H2O. The enzyme catalyses (9Z,12Z)-octadecadienoate + AH2 + O2 = (13R)-hydroxy-(9Z,11E)-octadecadienoate + A + H2O. It functions in the pathway lipid metabolism; prostaglandin biosynthesis. Dual cyclooxygenase and peroxidase in the biosynthesis pathway of prostanoids, a class of C20 oxylipins mainly derived from arachidonate ((5Z,8Z,11Z,14Z)-eicosatetraenoate, AA, C20:4(n-6)), with a particular role in the inflammatory response. The cyclooxygenase activity oxygenates AA to the hydroperoxy endoperoxide prostaglandin G2 (PGG2), and the peroxidase activity reduces PGG2 to the hydroxy endoperoxide prostaglandin H2 (PGH2), the precursor of all 2-series prostaglandins and thromboxanes. This complex transformation is initiated by abstraction of hydrogen at carbon 13 (with S-stereochemistry), followed by insertion of molecular O2 to form the endoperoxide bridge between carbon 9 and 11 that defines prostaglandins. The insertion of a second molecule of O2 (bis-oxygenase activity) yields a hydroperoxy group in PGG2 that is then reduced to PGH2 by two electrons. Similarly catalyzes successive cyclooxygenation and peroxidation of dihomo-gamma-linoleate (DGLA, C20:3(n-6)) and eicosapentaenoate (EPA, C20:5(n-3)) to corresponding PGH1 and PGH3, the precursors of 1- and 3-series prostaglandins. In an alternative pathway of prostanoid biosynthesis, converts 2-arachidonoyl lysophopholipids to prostanoid lysophopholipids, which are then hydrolyzed by intracellular phospholipases to release free prostanoids. Metabolizes 2-arachidonoyl glycerol yielding the glyceryl ester of PGH2, a process that can contribute to pain response. Generates lipid mediators from n-3 and n-6 polyunsaturated fatty acids (PUFAs) via a lipoxygenase-type mechanism. Oxygenates PUFAs to hydroperoxy compounds and then reduces them to corresponding alcohols. Plays a role in the generation of resolution phase interaction products (resolvins) during both sterile and infectious inflammation. Metabolizes docosahexaenoate (DHA, C22:6(n-3)) to 17R-HDHA, a precursor of the D-series resolvins (RvDs). As a component of the biosynthetic pathway of E-series resolvins (RvEs), converts eicosapentaenoate (EPA, C20:5(n-3)) primarily to 18S-HEPE that is further metabolized by ALOX5 and LTA4H to generate 18S-RvE1 and 18S-RvE2. In vascular endothelial cells, converts docosapentaenoate (DPA, C22:5(n-3)) to 13R-HDPA, a precursor for 13-series resolvins (RvTs) shown to activate macrophage phagocytosis during bacterial infection. In activated leukocytes, contributes to oxygenation of hydroxyeicosatetraenoates (HETE) to diHETES (5,15-diHETE and 5,11-diHETE). Can also use linoleate (LA, (9Z,12Z)-octadecadienoate, C18:2(n-6)) as substrate and produce hydroxyoctadecadienoates (HODEs) in a regio- and stereospecific manner, being (9R)-HODE ((9R)-hydroxy-(10E,12Z)-octadecadienoate) and (13S)-HODE ((13S)-hydroxy-(9Z,11E)-octadecadienoate) its major products. During neuroinflammation, plays a role in neuronal secretion of specialized preresolving mediators (SPMs) 15R-lipoxin A4 that regulates phagocytic microglia. The sequence is that of Prostaglandin G/H synthase 2 (PTGS2) from Bos taurus (Bovine).